The primary structure comprises 426 residues: Target of rapamycin complex 2 subunit AVO2 (426 aa).

ANK repeat units follow at residues 4 to 33, 39 to 68, 74 to 104, 108 to 137, and 141 to 171; these read EPSV…DLLT, NGWS…DKHE, KGNT…FINH, NGRA…DLWV, and NGDT…SLDD. A disordered region spans residues 259–302; the sequence is STHTTSGNGGNRRSSITNPVFNPRKPTLSTDSFSSSSNSSSRLR. The segment covering 260 to 278 has biased composition (polar residues); the sequence is THTTSGNGGNRRSSITNPV. A compositionally biased stretch (low complexity) spans 285 to 302; it reads TLSTDSFSSSSNSSSRLR. A phosphoserine mark is found at serine 315 and serine 350. The segment covering 350-359 has biased composition (polar residues); the sequence is SNDNVRGDSQ. A disordered region spans residues 350–392; the sequence is SNDNVRGDSQTATINDDGGGGNGGDATIGMGLRKDPDDENENK. Gly residues predominate over residues 366–375; that stretch reads DGGGGNGGDA. A compositionally biased stretch (basic and acidic residues) spans 381–392; the sequence is LRKDPDDENENK.

In terms of assembly, the target of rapamycin complex 2 (TORC2) is composed of at least AVO1, AVO2, BIT61, LST8, TOR2 and TSC11. TORC2 forms a homodimer. Contrary to TORC1, TORC2 does not bind to and is not sensitive to FKBP-rapamycin. AVO2 is peripherally associated to AVO1 and TSC11.

It is found in the cell membrane. The protein localises to the vacuole membrane. Its function is as follows. Component of TORC2, which regulates cell cycle-dependent polarization of the actin-cytoskeleton and cell wall integrity. TORC2 controls polarity of the actin cytoskeleton, which is required for orienting the secretory pathway toward discrete growth sites, via the RHO1/PKC1/MAPK cell integrity pathway. The sequence is that of Target of rapamycin complex 2 subunit AVO2 (AVO2) from Saccharomyces cerevisiae (strain ATCC 204508 / S288c) (Baker's yeast).